The chain runs to 108 residues: Phosphoribosyl-ATP pyrophosphatase (108 aa).

Residues 88–108 (VENELDRREGRSGIEEKASRK) form a disordered region. Residues 91-108 (ELDRREGRSGIEEKASRK) are compositionally biased toward basic and acidic residues.

The protein belongs to the PRA-PH family.

The protein localises to the cytoplasm. It carries out the reaction 1-(5-phospho-beta-D-ribosyl)-ATP + H2O = 1-(5-phospho-beta-D-ribosyl)-5'-AMP + diphosphate + H(+). Its pathway is amino-acid biosynthesis; L-histidine biosynthesis; L-histidine from 5-phospho-alpha-D-ribose 1-diphosphate: step 2/9. The sequence is that of Phosphoribosyl-ATP pyrophosphatase from Paracoccus denitrificans (strain Pd 1222).